The sequence spans 190 residues: Crossover junction endodeoxyribonuclease RuvC (190 aa).

Catalysis depends on residues aspartate 7, glutamate 67, and aspartate 140. Mg(2+)-binding residues include aspartate 7, glutamate 67, and aspartate 140.

This sequence belongs to the RuvC family. As to quaternary structure, homodimer which binds Holliday junction (HJ) DNA. The HJ becomes 2-fold symmetrical on binding to RuvC with unstacked arms; it has a different conformation from HJ DNA in complex with RuvA. In the full resolvosome a probable DNA-RuvA(4)-RuvB(12)-RuvC(2) complex forms which resolves the HJ. Mg(2+) serves as cofactor.

It is found in the cytoplasm. The enzyme catalyses Endonucleolytic cleavage at a junction such as a reciprocal single-stranded crossover between two homologous DNA duplexes (Holliday junction).. The RuvA-RuvB-RuvC complex processes Holliday junction (HJ) DNA during genetic recombination and DNA repair. Endonuclease that resolves HJ intermediates. Cleaves cruciform DNA by making single-stranded nicks across the HJ at symmetrical positions within the homologous arms, yielding a 5'-phosphate and a 3'-hydroxyl group; requires a central core of homology in the junction. The consensus cleavage sequence is 5'-(A/T)TT(C/G)-3'. Cleavage occurs on the 3'-side of the TT dinucleotide at the point of strand exchange. HJ branch migration catalyzed by RuvA-RuvB allows RuvC to scan DNA until it finds its consensus sequence, where it cleaves and resolves the cruciform DNA. The chain is Crossover junction endodeoxyribonuclease RuvC from Fusobacterium nucleatum subsp. nucleatum (strain ATCC 25586 / DSM 15643 / BCRC 10681 / CIP 101130 / JCM 8532 / KCTC 2640 / LMG 13131 / VPI 4355).